The primary structure comprises 204 residues: Large ribosomal subunit protein uL22c (204 aa).

This sequence belongs to the universal ribosomal protein uL22 family. As to quaternary structure, part of the 50S ribosomal subunit.

The protein resides in the plastid. Its subcellular location is the chloroplast. Functionally, this protein binds specifically to 23S rRNA. In terms of biological role, the globular domain of the protein is located near the polypeptide exit tunnel on the outside of the subunit, while an extended beta-hairpin is found that lines the wall of the exit tunnel in the center of the 70S ribosome. The chain is Large ribosomal subunit protein uL22c (rpl22) from Pisum sativum (Garden pea).